Reading from the N-terminus, the 181-residue chain is CASP-like protein 2C1 (181 aa).

Topologically, residues 1-7 are cytoplasmic; that stretch reads MALEIPK. The helical transmembrane segment at 8–28 threads the bilayer; it reads IEAILRGIAILLLVSTACLVG. Residues 29-49 are Extracellular-facing; that stretch reads LDSQTKFVIVYEKEVTYKDLH. Residues 50–70 form a helical membrane-spanning segment; the sequence is ALVVLVYVDAVAAAYNLLQLC. At 71–98 the chain is on the cytoplasmic side; that stretch reads RCSVSALSKGNFKGSYRYLSWACFVLDQ. A helical transmembrane segment spans residues 99 to 119; sequence LAAYTTFAAHSAALQHSVLGI. The Extracellular portion of the chain corresponds to 120–140; it reads TGAKVFQWMKWCNRFTRFCFQ. The helical transmembrane segment at 141-161 threads the bilayer; the sequence is IGGALTCGYIASVLMVMISFI. At 162 to 181 the chain is on the cytoplasmic side; sequence SAFNLFRLYSPKHFLRLKGT.

It belongs to the Casparian strip membrane proteins (CASP) family. In terms of assembly, homodimer and heterodimers.

The protein resides in the cell membrane. The chain is CASP-like protein 2C1 from Populus trichocarpa (Western balsam poplar).